The following is a 456-amino-acid chain: MKQKWIVLIIICIGVFMSTLDGSILNIANPTIAADFKINMSQIQWVVTAYMLVVTATMLFFGKLGDKVGSNRLYTLGFFIFTIGSFLCSMSNNLSTLISSRIFQAVGASILMATGLGIVSNAFPANEKGKAIGITGAVVGIGNMSGPVIGGIILEHFGWPSIFIINIPIGIIAVFLGIKFLPKPVLDEQNKSFDIPGLLLFASCTTLILLAMNEKGNTRLYLGITALIIFLLLALREVKFEQSFIDLPLFKNRNFTVGNIIGVACYFPQMAVSFLLPFYLEQLKNLSPMMAGYVMTVHPLIMVLIAPIAGSLSDKHGAKNILTASFSFMTISLVGMALLKADSPLYLLIVCLVIFGLGLGAFSSPNNSSILADVPPQKQGYGGSFLATIRNLSFALGTAFFSSFFAQSLTYNQKFKSHTSAYVIASNQSYWIAASVCFIGLILTVFFMRKTDKSIS.

14 consecutive transmembrane segments (helical) span residues 5-25, 45-65, 78-98, 105-125, 134-154, 158-178, 192-212, 220-240, 260-280, 289-309, 321-341, 343-363, 385-405, and 428-448; these read WIVL…GSIL, WVVT…GKLG, FFIF…STLI, AVGA…AFPA, ITGA…GIIL, GWPS…FLGI, SFDI…LLAM, LYLG…EVKF, IIGV…PFYL, MMAG…APIA, ILTA…LLKA, SPLY…GAFS, FLAT…SSFF, and QSYW…VFFM.

This sequence belongs to the major facilitator superfamily.

The protein resides in the cell membrane. Its function is as follows. Transports riboflavin into the cell. The chain is Riboflavin transporter RibZ from Clostridioides difficile (strain 630) (Peptoclostridium difficile).